The sequence spans 464 residues: tRNA modification GTPase MnmE (464 aa).

R27, E90, and K129 together coordinate (6S)-5-formyl-5,6,7,8-tetrahydrofolate. A TrmE-type G domain is found at 222-384; sequence GVALVLAGSV…LYDKIRALIS (163 aa). GTP contacts are provided by residues 232–237, 251–257, and 276–279; these read NAGKSS, SSYPGTT, and DTAG. Mg(2+)-binding residues include S236 and T257. K464 is a (6S)-5-formyl-5,6,7,8-tetrahydrofolate binding site.

The protein belongs to the TRAFAC class TrmE-Era-EngA-EngB-Septin-like GTPase superfamily. TrmE GTPase family. In terms of assembly, homodimer. Heterotetramer of two MnmE and two MnmG subunits. K(+) serves as cofactor.

Its subcellular location is the cytoplasm. Exhibits a very high intrinsic GTPase hydrolysis rate. Involved in the addition of a carboxymethylaminomethyl (cmnm) group at the wobble position (U34) of certain tRNAs, forming tRNA-cmnm(5)s(2)U34. The protein is tRNA modification GTPase MnmE of Borreliella burgdorferi (strain ATCC 35210 / DSM 4680 / CIP 102532 / B31) (Borrelia burgdorferi).